We begin with the raw amino-acid sequence, 253 residues long: 5-oxoprolinase subunit A (253 aa).

The protein belongs to the LamB/PxpA family. Forms a complex composed of PxpA, PxpB and PxpC.

The catalysed reaction is 5-oxo-L-proline + ATP + 2 H2O = L-glutamate + ADP + phosphate + H(+). Catalyzes the cleavage of 5-oxoproline to form L-glutamate coupled to the hydrolysis of ATP to ADP and inorganic phosphate. The polypeptide is 5-oxoprolinase subunit A (Bacillus anthracis (strain A0248)).